The following is a 200-amino-acid chain: HVA22-like protein k (200 aa).

The disordered stretch occupies residues 176-200 (LGEIANGSPVSETNSDSESDSNHED).

Belongs to the DP1 family.

This is HVA22-like protein k (HVA22K) from Arabidopsis thaliana (Mouse-ear cress).